We begin with the raw amino-acid sequence, 276 residues long: Undecaprenyl-diphosphatase (276 aa).

A run of 5 helical transmembrane segments spans residues 84–104 (YRLGWYVIIGTIPICILGLFF), 115–135 (LWVVVTALVVFSGVIALAEYV), 188–208 (FGFLLAIPAVFASGLFSLPDA), 222–242 (QLLVATLIAFVLGLTAVAWLL), and 250–270 (MYWFVGYRVLVGTGMLVLLAT).

This sequence belongs to the UppP family.

Its subcellular location is the cell membrane. It catalyses the reaction di-trans,octa-cis-undecaprenyl diphosphate + H2O = di-trans,octa-cis-undecaprenyl phosphate + phosphate + H(+). In terms of biological role, catalyzes the dephosphorylation of undecaprenyl diphosphate (UPP). Confers resistance to bacitracin. This Mycobacterium bovis (strain ATCC BAA-935 / AF2122/97) protein is Undecaprenyl-diphosphatase.